A 305-amino-acid polypeptide reads, in one-letter code: Ornithine carbamoyltransferase (305 aa).

Carbamoyl phosphate is bound by residues 47-50, Arg-98, and 125-128; these read STRT and HPCQ. L-ornithine contacts are provided by residues Asn-156, Asp-221, and 225-226; that span reads SM. Residues 262–263 and Arg-290 each bind carbamoyl phosphate; that span reads CL.

The protein belongs to the aspartate/ornithine carbamoyltransferase superfamily. OTCase family.

It is found in the cytoplasm. It catalyses the reaction carbamoyl phosphate + L-ornithine = L-citrulline + phosphate + H(+). It functions in the pathway amino-acid biosynthesis; L-arginine biosynthesis; L-arginine from L-ornithine and carbamoyl phosphate: step 1/3. Reversibly catalyzes the transfer of the carbamoyl group from carbamoyl phosphate (CP) to the N(epsilon) atom of ornithine (ORN) to produce L-citrulline. The sequence is that of Ornithine carbamoyltransferase from Methanococcus vannielii (strain ATCC 35089 / DSM 1224 / JCM 13029 / OCM 148 / SB).